A 278-amino-acid polypeptide reads, in one-letter code: Manganese import system permease protein ScaB (278 aa).

Helical transmembrane passes span A18–L38, I61–I81, T94–A114, L134–F154, V174–Q194, V196–A216, M222–Y242, and V246–I266.

This sequence belongs to the ABC-3 integral membrane protein family. The complex is composed of two ATP-binding proteins (ScaC), two transmembrane proteins (ScaB) and a solute-binding protein (ScaA).

It localises to the cell membrane. Part of the high-affinity ABC transporter complex ScaABC involved in manganese import. Probably responsible for the translocation of the substrate across the membrane. Essential for growth under Mn(2+)-limiting conditions. In Streptococcus gordonii, this protein is Manganese import system permease protein ScaB.